The following is a 591-amino-acid chain: L-fucose isomerase (591 aa).

Active-site proton acceptor residues include Glu337 and Asp361. Positions 337, 361, and 528 each coordinate Mn(2+).

This sequence belongs to the L-fucose isomerase family. In terms of assembly, homohexamer. Mn(2+) serves as cofactor.

It is found in the cytoplasm. The catalysed reaction is L-fucose = L-fuculose. It functions in the pathway carbohydrate degradation; L-fucose degradation; L-lactaldehyde and glycerone phosphate from L-fucose: step 1/3. Functionally, converts the aldose L-fucose into the corresponding ketose L-fuculose. This chain is L-fucose isomerase, found in Salmonella heidelberg (strain SL476).